A 151-amino-acid polypeptide reads, in one-letter code: Glutamate mutase sigma subunit 1 (151 aa).

The region spanning 7-140 (PRTVILGVIG…EMLREDLQLT (134 aa)) is the B12-binding domain. Adenosylcob(III)alamin contacts are provided by residues 17–21 (SDAHV), H20, 65–67 (SSL), and 96–100 (NLAVG).

Belongs to the methylaspartate mutase GlmS subunit family. As to quaternary structure, heterotetramer composed of 2 epsilon subunits (GlmE) and 2 sigma subunits (GlmS). GlmE exists as a homodimer and GlmS as a monomer. Adenosylcob(III)alamin is required as a cofactor.

It catalyses the reaction (2S,3S)-3-methyl-L-aspartate = L-glutamate. It participates in amino-acid degradation; L-glutamate degradation via mesaconate pathway; acetate and pyruvate from L-glutamate: step 1/4. Functionally, catalyzes the carbon skeleton rearrangement of L-glutamate to L-threo-3-methylaspartate ((2S,3S)-3-methylaspartate). The sequence is that of Glutamate mutase sigma subunit 1 from Haloarcula marismortui (strain ATCC 43049 / DSM 3752 / JCM 8966 / VKM B-1809) (Halobacterium marismortui).